The primary structure comprises 485 residues: Protein DETOXIFICATION 8 (485 aa).

The interval Met-1 to Gln-26 is disordered. The next 12 helical transmembrane spans lie at Phe-41–Ile-61, Ala-74–Ala-94, Tyr-118–Met-138, Ser-159–Phe-179, Leu-188–Tyr-208, Phe-212–Leu-232, Leu-263–Leu-283, Val-297–Ala-317, Ala-338–Tyr-358, Ile-381–Val-401, Ala-414–Val-434, and Trp-442–Phe-462.

Belongs to the multi antimicrobial extrusion (MATE) (TC 2.A.66.1) family.

The protein resides in the membrane. The protein is Protein DETOXIFICATION 8 of Arabidopsis thaliana (Mouse-ear cress).